The sequence spans 216 residues: MRLILLGPPGAGKGTQAASIVEKYHIPHISTGDIFRYNIKQGTELGKKAKSYMDQGLLVPDEVVVEIVEDRLKKEDCENGFLLDGFPRTVVQAEALDKALVDMNISLDKVINIQVDKERLIERAVGRRICRECGATFHVQYNPSTKGALCDQCGGELYQRDDDNEETVTRRIEVYLSETTPLVEYYSSQNKLVTIDGDKKINEVFANIVTSLGSDL.

An ATP-binding site is contributed by 10 to 15 (GAGKGT). Positions 30–59 (STGDIFRYNIKQGTELGKKAKSYMDQGLLV) are NMP. Residues Thr31, Arg36, 57-59 (LLV), 85-88 (GFPR), and Gln92 contribute to the AMP site. Positions 126-163 (GRRICRECGATFHVQYNPSTKGALCDQCGGELYQRDDD) are LID. Arg127 is a binding site for ATP. Zn(2+) contacts are provided by Cys130 and Cys133. 136-137 (TF) contacts ATP. Residues Cys150 and Cys153 each coordinate Zn(2+). AMP is bound by residues Arg160 and Arg171. Residue Lys199 coordinates ATP.

It belongs to the adenylate kinase family. Monomer.

It localises to the cytoplasm. The enzyme catalyses AMP + ATP = 2 ADP. It functions in the pathway purine metabolism; AMP biosynthesis via salvage pathway; AMP from ADP: step 1/1. In terms of biological role, catalyzes the reversible transfer of the terminal phosphate group between ATP and AMP. Plays an important role in cellular energy homeostasis and in adenine nucleotide metabolism. This chain is Adenylate kinase, found in Alkaliphilus oremlandii (strain OhILAs) (Clostridium oremlandii (strain OhILAs)).